Here is a 267-residue protein sequence, read N- to C-terminus: Tryptophan synthase alpha chain (267 aa).

Catalysis depends on proton acceptor residues Glu49 and Asp60.

This sequence belongs to the TrpA family. Tetramer of two alpha and two beta chains.

It carries out the reaction (1S,2R)-1-C-(indol-3-yl)glycerol 3-phosphate + L-serine = D-glyceraldehyde 3-phosphate + L-tryptophan + H2O. It participates in amino-acid biosynthesis; L-tryptophan biosynthesis; L-tryptophan from chorismate: step 5/5. In terms of biological role, the alpha subunit is responsible for the aldol cleavage of indoleglycerol phosphate to indole and glyceraldehyde 3-phosphate. The sequence is that of Tryptophan synthase alpha chain from Chloroflexus aggregans (strain MD-66 / DSM 9485).